A 212-amino-acid polypeptide reads, in one-letter code: uncharacterized protein (212 aa).

Glycine 53, glutamate 74, and aspartate 97 together coordinate S-adenosyl-L-methionine.

It belongs to the methyltransferase superfamily. YrrT family.

Could be a S-adenosyl-L-methionine-dependent methyltransferase. This is an uncharacterized protein from Bacillus cereus (strain ATCC 14579 / DSM 31 / CCUG 7414 / JCM 2152 / NBRC 15305 / NCIMB 9373 / NCTC 2599 / NRRL B-3711).